Reading from the N-terminus, the 350-residue chain is MSQLQVRHDWKREEIEALFALPMNDLLFKAHSIHREVYDPNEVQISRLLSIKTGACPEDCKYCPQSARYDTGLEKERLLAMETVLTEARSAKAAGASRFCMGAAWRNPKEKDMPYLKQMVQEVKALGMETCMTLGMLSEDQANDLASAGLDYYNHNLDTSPEYYGDVITTRTYQNRLDTLTNVRASGMKVCSGGIVGMGEKATDRAGLLQQLANLPQHPDSVPINMLVKVAGTPFEKLDDLDPLEFVRTIAVARILMPLSRVRLSAGRENMSDELQAMCFFAGANSIFYGCKLLTTPNPEESDDMGLFRRLGLRPEQGAAAKLEEESAVLAKAAAYQDKSSAQFYDAGAL.

Residues 41-268 (NEVQISRLLS…LSRVRLSAGR (228 aa)) form the Radical SAM core domain. The [4Fe-4S] cluster site is built by cysteine 56, cysteine 60, and cysteine 63. The [2Fe-2S] cluster site is built by cysteine 100, cysteine 131, cysteine 191, and arginine 263.

It belongs to the radical SAM superfamily. Biotin synthase family. In terms of assembly, homodimer. It depends on [4Fe-4S] cluster as a cofactor. [2Fe-2S] cluster is required as a cofactor.

The catalysed reaction is (4R,5S)-dethiobiotin + (sulfur carrier)-SH + 2 reduced [2Fe-2S]-[ferredoxin] + 2 S-adenosyl-L-methionine = (sulfur carrier)-H + biotin + 2 5'-deoxyadenosine + 2 L-methionine + 2 oxidized [2Fe-2S]-[ferredoxin]. Its pathway is cofactor biosynthesis; biotin biosynthesis; biotin from 7,8-diaminononanoate: step 2/2. Functionally, catalyzes the conversion of dethiobiotin (DTB) to biotin by the insertion of a sulfur atom into dethiobiotin via a radical-based mechanism. This Shewanella baltica (strain OS223) protein is Biotin synthase.